Here is a 641-residue protein sequence, read N- to C-terminus: Packaging protein UL32 homolog (641 aa).

8 residues coordinate Zn(2+): Cys101, Cys104, His181, Cys187, Cys467, Cys470, His540, and Cys547. Zinc finger stretches follow at residues 101 to 187 and 467 to 547; these read CLVC…LHGC and CLLC…DPMC.

Belongs to the herpesviridae UL32 protein family.

Its subcellular location is the host cytoplasm. The protein localises to the host nucleus. Plays a role in efficient localization of neo-synthesized capsids to nuclear replication compartments, thereby controlling cleavage and packaging of virus genomic DNA. The chain is Packaging protein UL32 homolog (MDV046) from Gallus gallus (Chicken).